A 107-amino-acid polypeptide reads, in one-letter code: Urease subunit beta (107 aa).

Belongs to the urease beta subunit family. Heterotrimer of UreA (gamma), UreB (beta) and UreC (alpha) subunits. Three heterotrimers associate to form the active enzyme.

Its subcellular location is the cytoplasm. It carries out the reaction urea + 2 H2O + H(+) = hydrogencarbonate + 2 NH4(+). Its pathway is nitrogen metabolism; urea degradation; CO(2) and NH(3) from urea (urease route): step 1/1. This Bacillus sp. (strain TB-90) protein is Urease subunit beta.